The chain runs to 146 residues: 3-dehydroquinate dehydratase (146 aa).

The active-site Proton acceptor is Y22. N73, H79, and D86 together coordinate substrate. The Proton donor role is filled by H99. Residues 100–101 and R110 contribute to the substrate site; that span reads IS.

The protein belongs to the type-II 3-dehydroquinase family. Homododecamer.

It catalyses the reaction 3-dehydroquinate = 3-dehydroshikimate + H2O. It participates in metabolic intermediate biosynthesis; chorismate biosynthesis; chorismate from D-erythrose 4-phosphate and phosphoenolpyruvate: step 3/7. Functionally, catalyzes a trans-dehydration via an enolate intermediate. This chain is 3-dehydroquinate dehydratase, found in Prochlorococcus marinus (strain MIT 9515).